Consider the following 20-residue polypeptide: KVFFEERFEDGWENRWVKKD.

This sequence belongs to the calreticulin family. Post-translationally, glycosylated.

The protein localises to the endoplasmic reticulum lumen. Its function is as follows. Molecular calcium-binding chaperone promoting folding, oligomeric assembly and quality control in the ER via the calreticulin/calnexin cycle. This lectin may interact transiently with almost all of the monoglucosylated glycoproteins that are synthesized in the ER. This chain is Calreticulin, found in Spinacia oleracea (Spinach).